The chain runs to 935 residues: Phosphoenolpyruvate carboxylase (935 aa).

Residues His-161 and Lys-593 contribute to the active site.

The protein belongs to the PEPCase type 1 family. Mg(2+) serves as cofactor.

The enzyme catalyses oxaloacetate + phosphate = phosphoenolpyruvate + hydrogencarbonate. Its function is as follows. Forms oxaloacetate, a four-carbon dicarboxylic acid source for the tricarboxylic acid cycle. In Mycobacterium avium (strain 104), this protein is Phosphoenolpyruvate carboxylase.